The sequence spans 412 residues: Circumsporozoite protein (412 aa).

Positions 1–18 are cleaved as a signal peptide; sequence MMRKLAILSVSSFLFVEA. The disordered stretch occupies residues 69–328; that stretch reads SRSLGENDDG…KNNNNEEPSD (260 aa). Residues 85 to 105 show a composition bias toward basic and acidic residues; sequence NGREGKDEDKRDGNNEDNEKL. Residues 104-111 form a required for the binding to heparan sulfate proteoglycans (HSPGs) on the surface of host hepatocytes region; sequence KLRKPKHK. The region I; contains the proteolytic cleavage site stretch occupies residues 112–116; the sequence is KLKQP. Residues 120–288 show a composition bias toward low complexity; that stretch reads NPDPNANPNV…PNANPNANPN (169 aa). Tandem repeats lie at residues 123-126, 127-130, 131-134, 135-138, 139-142, 143-146, 147-150, 151-154, 155-158, 159-162, 163-166, 167-170, 171-174, 175-178, 179-182, 183-186, 187-190, 191-194, 195-198, 199-202, 203-206, 207-210, 211-214, 215-218, 219-222, 223-226, 227-230, 231-234, 235-238, 239-242, 243-246, 247-250, 251-254, 255-258, 259-262, 263-266, 267-270, 271-274, 275-278, 279-282, and 283-286. A 41 X 4 AA tandem repeats of P-N-[AV]-[ND] region spans residues 123–286; sequence PNANPNVDPN…ANPNANPNAN (164 aa). Over residues 289–304 the composition is skewed to polar residues; sequence KNNQGNGQGHNMPNDP. Residues 310–324 are compositionally biased toward low complexity; it reads ENANANNAVKNNNNE. Residues 337-390 enclose the TSP type-1 domain; it reads KIKNSISTEWSPCSVTCGNGIQVRIKPGSANKPKDELDYENDIEKKICKMEKCS. 2 disulfides stabilise this stretch: Cys-349–Cys-384 and Cys-353–Cys-389. An O-linked (Fuc) threonine glycan is attached at Thr-352. The GPI-anchor amidated cysteine moiety is linked to residue Cys-389. The propeptide at 390-412 is removed in mature form; the sequence is SSVFNVVNSSIGLIMVLSFLFLN.

It belongs to the plasmodium circumsporozoite protein family. In terms of processing, during host cell invasion, proteolytically cleaved at the cell membrane in the region I by a papain-like cysteine protease of parasite origin. Cleavage is triggered by the sporozoite contact with highly sulfated heparan sulfate proteoglycans (HSPGs) present on the host hepatocyte cell surface. Cleavage exposes the TSP type-1 (TSR) domain and is required for productive invasion of host hepatocytes but not for adhesion to the host cell membrane. Cleavage is dispensable for sporozoite development in the oocyst, motility and for traversal of host and vector cells. O-glycosylated; maybe by POFUT2.

Its subcellular location is the cell membrane. The protein resides in the cytoplasm. In terms of biological role, essential sporozoite protein. In the mosquito vector, required for sporozoite development in the oocyst, migration through the vector hemolymph and entry into the vector salivary glands. In the vertebrate host, required for sporozoite migration through the host dermis and infection of host hepatocytes. Binds to highly sulfated heparan sulfate proteoglycans (HSPGs) on the surface of host hepatocytes. Its function is as follows. In the vertebrate host, binds to highly sulfated heparan sulfate proteoglycans (HSPGs) on the surface of host hepatocytes and is required for sporozoite invasion of the host hepatocytes. The polypeptide is Circumsporozoite protein (Plasmodium falciparum).